Here is a 245-residue protein sequence, read N- to C-terminus: Eukaryotic translation initiation factor 6 (245 aa).

It belongs to the eIF-6 family. As to quaternary structure, monomer. Associates with the 60S ribosomal subunit.

It is found in the cytoplasm. The protein localises to the nucleus. It localises to the nucleolus. Functionally, binds to the 60S ribosomal subunit and prevents its association with the 40S ribosomal subunit to form the 80S initiation complex in the cytoplasm. May also be involved in ribosome biogenesis. The protein is Eukaryotic translation initiation factor 6 (eif6) of Danio rerio (Zebrafish).